A 211-amino-acid chain; its full sequence is Mitotic spindle assembly checkpoint protein MAD2B (211 aa).

The region spanning 13-203 (QVVADILCEF…SDILKMQLYV (191 aa)) is the HORMA domain.

Homooligomer. Interacts with rev1. Interacts with rev3l. Interacts with fzr1 (in complex with the anaphase promoting complex APC). May interact with cdc20.

The protein resides in the nucleus. Its subcellular location is the cytoplasm. It is found in the cytoskeleton. It localises to the spindle. In terms of biological role, adapter protein able to interact with different proteins and involved in different biological processes. Mediates the interaction between the error-prone DNA polymerase zeta catalytic subunit rev3l and the inserter polymerase rev1, thereby mediating the second polymerase switching in translesion DNA synthesis. Translesion DNA synthesis releases the replication blockade of replicative polymerases, stalled in presence of DNA lesions. May also play a role in signal transduction in response to DNA damage. May regulate the activation of the anaphase promoting complex APC thereby regulating progression through the cell cycle. Through transcriptional regulation may play a role in epithelial-mesenchymal transdifferentiation. Its function is as follows. Inhibits the fzr1-APC complex activity during mitosis. Plays a role in progression of mitosis. The polypeptide is Mitotic spindle assembly checkpoint protein MAD2B (mad2l2) (Xenopus laevis (African clawed frog)).